Consider the following 122-residue polypeptide: MIQMQTVLDVADNSGAKKLFCIKVLGGSKRKYAGVGDIVVCSVREAVPNAKVKKGDVVKVVIVRTAKEIGRPDGSYIRFDDNSGVVINNQREPVGTRIFGPVARELRAQKFMKIISLAPEVL.

Belongs to the universal ribosomal protein uL14 family. As to quaternary structure, part of the 50S ribosomal subunit. Forms a cluster with proteins L3 and L19. In the 70S ribosome, L14 and L19 interact and together make contacts with the 16S rRNA in bridges B5 and B8.

Binds to 23S rRNA. Forms part of two intersubunit bridges in the 70S ribosome. The protein is Large ribosomal subunit protein uL14 of Geobacter sulfurreducens (strain ATCC 51573 / DSM 12127 / PCA).